A 464-amino-acid chain; its full sequence is Probable glycine dehydrogenase (decarboxylating) subunit 1 (464 aa).

This sequence belongs to the GcvP family. N-terminal subunit subfamily. As to quaternary structure, the glycine cleavage system is composed of four proteins: P, T, L and H. In this organism, the P 'protein' is a heterodimer of two subunits.

The catalysed reaction is N(6)-[(R)-lipoyl]-L-lysyl-[glycine-cleavage complex H protein] + glycine + H(+) = N(6)-[(R)-S(8)-aminomethyldihydrolipoyl]-L-lysyl-[glycine-cleavage complex H protein] + CO2. The glycine cleavage system catalyzes the degradation of glycine. The P protein binds the alpha-amino group of glycine through its pyridoxal phosphate cofactor; CO(2) is released and the remaining methylamine moiety is then transferred to the lipoamide cofactor of the H protein. The protein is Probable glycine dehydrogenase (decarboxylating) subunit 1 of Thiobacillus denitrificans (strain ATCC 25259 / T1).